Reading from the N-terminus, the 189-residue chain is Elongation factor P (189 aa).

It belongs to the elongation factor P family.

Its subcellular location is the cytoplasm. Its pathway is protein biosynthesis; polypeptide chain elongation. In terms of biological role, involved in peptide bond synthesis. Stimulates efficient translation and peptide-bond synthesis on native or reconstituted 70S ribosomes in vitro. Probably functions indirectly by altering the affinity of the ribosome for aminoacyl-tRNA, thus increasing their reactivity as acceptors for peptidyl transferase. The chain is Elongation factor P from Campylobacter fetus subsp. fetus (strain 82-40).